We begin with the raw amino-acid sequence, 453 residues long: Tubulin gamma chain (453 aa).

142–148 (AGGTGSG) lines the GTP pocket.

This sequence belongs to the tubulin family.

It is found in the cytoplasm. The protein localises to the cytoskeleton. The protein resides in the microtubule organizing center. It localises to the spindle pole body. Functionally, tubulin is the major constituent of microtubules. The gamma chain is found at microtubule organizing centers (MTOC) such as the spindle poles or the centrosome, suggesting that it is involved in the minus-end nucleation of microtubule assembly. The chain is Tubulin gamma chain (TUB4) from Coprinopsis cinerea (strain Okayama-7 / 130 / ATCC MYA-4618 / FGSC 9003) (Inky cap fungus).